An 821-amino-acid polypeptide reads, in one-letter code: Calpain-3 (821 aa).

Positions 1 to 37 (MPTVISPTVAPRTGAEPRSPGPVPHPAQGKTTEAGGG) are disordered. One can recognise a Calpain catalytic domain in the interval 74 to 417 (LYLDPEFPPD…FTKLEICNLT (344 aa)). Residues cysteine 129, histidine 334, and asparagine 358 contribute to the active site. A domain III region spans residues 418–586 (ADALESDKLQ…KRNLSEEAEN (169 aa)). Residues 587–649 (TISVDRPVKK…RPGHTDQESE (63 aa)) form a linker region. Residues 603-651 (IFVSDRANSNKELGVDQEAEEGKDKTGPDKQGESPQPRPGHTDQESEEQ) form a disordered region. Positions 622–634 (EEGKDKTGPDKQG) are enriched in basic and acidic residues. 4 EF-hand domains span residues 649-683 (EEQQ…VVNK), 692-725 (FTLE…KKIK), 722-757 (KKIK…AGFH), and 787-821 (VRLE…TMYA). Positions 650–820 (EQQQFRNIFR…VLEWLQLTMY (171 aa)) are domain IV. Residues alanine 662, aspartate 665, glutamate 667, glutamate 672, aspartate 705, aspartate 707, serine 709, arginine 711, glutamate 716, aspartate 735, aspartate 737, serine 739, threonine 741, glutamate 746, aspartate 800, aspartate 802, aspartate 804, and isoleucine 806 each contribute to the Ca(2+) site.

Belongs to the peptidase C2 family. Homodimer; via EF-hand domain 4. Interacts with TTN/titin. Interacts with CMYA5; this interaction, which results in CMYA5 proteolysis, may protect CAPN3 from autolysis. Interacts with SIMC1. Interacts with UTP25; the interaction is required for CAPN3 translocation to the nucleolus. In terms of tissue distribution, skeletal muscle.

It localises to the cytoplasm. Its subcellular location is the nucleus. The protein localises to the nucleolus. It catalyses the reaction Broad endopeptidase activity.. Activated by micromolar concentrations of calcium and inhibited by calpastatin. Its function is as follows. Calcium-regulated non-lysosomal thiol-protease. Proteolytically cleaves CTBP1 at 'His-399'. Mediates, with UTP25, the proteasome-independent degradation of p53/TP53. The sequence is that of Calpain-3 (Capn3) from Rattus norvegicus (Rat).